A 356-amino-acid polypeptide reads, in one-letter code: Staphylococcal superantigen-like 3 (356 aa).

Positions 1–30 (MKMRTIAKTSLALGLLTTGAITVTTQSVKA) are cleaved as a signal peptide. The tract at residues 61-165 (ATTQAANTRQ…TIKQAQTDMT (105 aa)) is disordered. Positions 69–104 (RQERTPKLEKAPNTNEEKTSASKIEKISQPKQEEQK) are enriched in basic and acidic residues. Residues 114–141 (PKQEQSQTTTESTTPKTKVTTPPSTNTP) show a composition bias toward low complexity. Polar residues predominate over residues 142-164 (QPMQSTKSDTPQSPTIKQAQTDM). Residues 228–326 (IDVFIVLEDN…VIKMKNGGKY (99 aa)) are sialyl Lewis X-binding.

The protein belongs to the staphylococcal/streptococcal toxin family. In terms of assembly, interacts with host TLR2 (via its extracellular domain).

Its subcellular location is the secreted. Its function is as follows. Secreted protein that plays an essential role in immune innate response inhibition by interacting with and inhibiting host TLR2. In turn, bacteria recognition by immune cells is impaired and cytokine production is inhibited. Mechanistically, by interacting with TLR2, blocks ligand binding and thus inhibits activation. Second, by interacting with an already formed TLR2-lipopeptide complex, prevents TLR heterodimerization and downstream signaling. The interaction with host TLR2 does not involve sialyl Lewis X interactions. The protein is Staphylococcal superantigen-like 3 of Staphylococcus aureus (strain NCTC 8325 / PS 47).